A 183-amino-acid polypeptide reads, in one-letter code: Bifunctional protein PyrR (183 aa).

Substrate contacts are provided by residues 42-43 (TR), R87, 104-112 (DDVLYTGRT), R137, and V161. The short motif at 100-112 (VILVDDVLYTGRT) is the PRPP-binding element.

It belongs to the purine/pyrimidine phosphoribosyltransferase family. PyrR subfamily.

The enzyme catalyses UMP + diphosphate = 5-phospho-alpha-D-ribose 1-diphosphate + uracil. In terms of biological role, regulates the transcription of the pyrimidine nucleotide (pyr) operon in response to exogenous pyrimidines. Also displays a weak uracil phosphoribosyltransferase activity which is not physiologically significant. The polypeptide is Bifunctional protein PyrR (Deinococcus radiodurans (strain ATCC 13939 / DSM 20539 / JCM 16871 / CCUG 27074 / LMG 4051 / NBRC 15346 / NCIMB 9279 / VKM B-1422 / R1)).